The sequence spans 245 residues: MNFPYRNIVVLTGAGISAESGIQTFRAQDGLWENHRIEDVATPEGFARDPDLVQDFYNQRRKKLQDPNIEPNAAHLALGRLEAELDGQVTIVTQNIDNLHERGGNKNIIHMHGELLKSRCSVSNQVIEETGDILTGDLCHCCQMPSQMRPHVVWFGEMPLRMGEIYSALETADLFISIGTSGVVYPAAGFVHDAKMHGAHTIEINLEPSAIESEFVEKRYGKASVEVPKLVEELLAHLESNVENA.

The Deacetylase sirtuin-type domain occupies 1–237; the sequence is MNFPYRNIVV…PKLVEELLAH (237 aa). 13–32 serves as a coordination point for NAD(+); sequence GAGISAESGIQTFRAQDGLW. Residues Tyr57 and Arg60 each contribute to the substrate site. NAD(+) is bound at residue 94 to 97; sequence QNID. Catalysis depends on His112, which acts as the Proton acceptor. Residues Cys120 and Cys139 each contribute to the Zn(2+) site. NAD(+)-binding positions include 179-181, 205-207, and Ala223; these read GTS and NLE.

The protein belongs to the sirtuin family. Class III subfamily. It depends on Zn(2+) as a cofactor.

It localises to the cytoplasm. It carries out the reaction N(6)-acetyl-L-lysyl-[protein] + NAD(+) + H2O = 2''-O-acetyl-ADP-D-ribose + nicotinamide + L-lysyl-[protein]. It catalyses the reaction N(6)-succinyl-L-lysyl-[protein] + NAD(+) + H2O = 2''-O-succinyl-ADP-D-ribose + nicotinamide + L-lysyl-[protein]. In terms of biological role, NAD-dependent lysine deacetylase and desuccinylase that specifically removes acetyl and succinyl groups on target proteins. Modulates the activities of several proteins which are inactive in their acylated form. The sequence is that of NAD-dependent protein deacylase from Vibrio vulnificus (strain YJ016).